Reading from the N-terminus, the 315-residue chain is MSTLTIATRESRLALWQAEYVQDLLTRRGHQVGLLGMTTLGDQILDRALSKVGGKGLFVKELEVALEDGRADLAVHSLKDVPMELPDGFALACVMEREDPRDAFVSNQYANLASLPQGAVVGTSSLRRMALLRALRPDLKIEPLRGNLDTRLRKLDDGMYAAIVLAAAGLKRLGLSQRIRATFEPTDMLPAAGQGALGIEVRSQRQDVIDALAPLAHHTTWLAVSAERAVSRAMGGSCSMPLAAYATLAADILTIDAAWGDPDGKLALVHVRASAAVSDLASATALGARVAADLRAAVLANGGTLLVADAPQGQA.

Cys238 bears the S-(dipyrrolylmethanemethyl)cysteine mark.

This sequence belongs to the HMBS family. In terms of assembly, monomer. The cofactor is dipyrromethane.

It carries out the reaction 4 porphobilinogen + H2O = hydroxymethylbilane + 4 NH4(+). Its pathway is porphyrin-containing compound metabolism; protoporphyrin-IX biosynthesis; coproporphyrinogen-III from 5-aminolevulinate: step 2/4. In terms of biological role, tetrapolymerization of the monopyrrole PBG into the hydroxymethylbilane pre-uroporphyrinogen in several discrete steps. The sequence is that of Porphobilinogen deaminase from Albidiferax ferrireducens (strain ATCC BAA-621 / DSM 15236 / T118) (Rhodoferax ferrireducens).